We begin with the raw amino-acid sequence, 166 residues long: Protein adg1 (166 aa).

The first 22 residues, 1-22 (MFLRSIFQTLCAVSFLAGSVFA), serve as a signal peptide directing secretion.

Its subcellular location is the endoplasmic reticulum. This is Protein adg1 (adg1) from Schizosaccharomyces pombe (strain 972 / ATCC 24843) (Fission yeast).